Here is a 44-residue protein sequence, read N- to C-terminus: Large ribosomal subunit protein bL34 (44 aa).

It belongs to the bacterial ribosomal protein bL34 family.

The protein is Large ribosomal subunit protein bL34 of Neorickettsia sennetsu (strain ATCC VR-367 / Miyayama) (Ehrlichia sennetsu).